The sequence spans 952 residues: 2-oxoglutarate dehydrogenase E1 component (952 aa).

It belongs to the alpha-ketoglutarate dehydrogenase family. As to quaternary structure, homodimer. Part of the 2-oxoglutarate dehydrogenase (OGDH) complex composed of E1 (2-oxoglutarate dehydrogenase), E2 (dihydrolipoamide succinyltransferase) and E3 (dihydrolipoamide dehydrogenase); the complex contains multiple copies of the three enzymatic components (E1, E2 and E3). It depends on thiamine diphosphate as a cofactor.

It catalyses the reaction N(6)-[(R)-lipoyl]-L-lysyl-[protein] + 2-oxoglutarate + H(+) = N(6)-[(R)-S(8)-succinyldihydrolipoyl]-L-lysyl-[protein] + CO2. E1 component of the 2-oxoglutarate dehydrogenase (OGDH) complex which catalyzes the decarboxylation of 2-oxoglutarate, the first step in the conversion of 2-oxoglutarate to succinyl-CoA and CO(2). The chain is 2-oxoglutarate dehydrogenase E1 component from Geobacillus sp. (strain WCH70).